Reading from the N-terminus, the 349-residue chain is UDP-galactose/UDP-glucose transporter 4 (349 aa).

8 consecutive transmembrane segments (helical) span residues 23 to 43 (WQQF…NGIC), 56 to 76 (GWYF…MYGF), 115 to 135 (IMFK…IPGL), 140 to 160 (PVHE…FTLA), 167 to 187 (NFSI…AFLG), 205 to 225 (MLFC…ILTG), 248 to 268 (AMAT…FGAA), and 293 to 313 (LTEQ…LKMV). Positions 316-349 (PNPNPKSSGSGQTPGKLERVKFEKEDDEESRPLV) are disordered. Acidic residues predominate over residues 340–349 (EDDEESRPLV).

It belongs to the nucleotide-sugar transporter family. UDP-galactose:UMP antiporter (TC 2.A.7.11) subfamily.

Its subcellular location is the membrane. Sugar transporter involved in the transport of nucleotide-sugars from cytoplasm into the Golgi and/or the endoplasmic reticulum. This chain is UDP-galactose/UDP-glucose transporter 4, found in Arabidopsis thaliana (Mouse-ear cress).